Reading from the N-terminus, the 694-residue chain is E3 ubiquitin-protein ligase SPL11 (694 aa).

The span at 1 to 12 shows a compositional bias: acidic residues; the sequence is MAGDRAEEEEGE. 2 disordered regions span residues 1 to 21 and 343 to 363; these read MAGD…ARAA and NGME…ACSS. A U-box domain is found at 272–346; the sequence is TIPDEFRCPI…SQWCETNGME (75 aa). The span at 350–363 shows a compositional bias: polar residues; it reads RSTQPNKPTPACSS. ARM repeat units lie at residues 398–438, 439–479, 480–520, 521–561, 562–602, and 603–650; these read NANN…NLSI, HEDN…SLSV, IDEY…NLCI, YQGN…ILSS, HPEG…HLCS, and GEHH…FLVQ. Over residues 650–667 the composition is skewed to low complexity; sequence QQQEEQESQSQASAQVPP. A disordered region spans residues 650–694; it reads QQQEEQESQSQASAQVPPQATPEQVPENDIPEQLDSPASQYPMVV.

In terms of assembly, interacts with SPIN1 (via N-terminus). Highly expressed in leaf, at intermediate levels in shoot and weakly in root.

It is found in the nucleus. It localises to the cytoplasm. The enzyme catalyses S-ubiquitinyl-[E2 ubiquitin-conjugating enzyme]-L-cysteine + [acceptor protein]-L-lysine = [E2 ubiquitin-conjugating enzyme]-L-cysteine + N(6)-ubiquitinyl-[acceptor protein]-L-lysine.. Its pathway is protein modification; protein ubiquitination. E3 ubiquitin-protein ligase that negatively regulates programmed cell death and disease resistance. Participates in flowering time control by mediating ubiquitination and subsequent proteasomal degradation of SPIN1. The protein is E3 ubiquitin-protein ligase SPL11 (SPL11) of Oryza sativa subsp. japonica (Rice).